Here is a 427-residue protein sequence, read N- to C-terminus: DEAD-box ATP-dependent RNA helicase 56 (427 aa).

The segment at 1 to 30 (MGDARDNEAYEEELLDYEEEDEKVPDSGNK) is disordered. Acidic residues predominate over residues 9–23 (AYEEELLDYEEEDEK). Positions 46-74 (SGFRDFLLKPELLRAIVDSGFEHPSEVQH) match the Q motif motif. Residues 77 to 250 (IPQAILGMDV…KKFMQDPMEI (174 aa)) form the Helicase ATP-binding domain. 90–97 (AKSGMGKT) is a binding site for ATP. Positions 197-200 (DECD) match the DECD box motif. One can recognise a Helicase C-terminal domain in the interval 278-423 (KLNDLLDALD…ELPEQIDTST (146 aa)).

Belongs to the DEAD box helicase family. DECD subfamily. In terms of assembly, interacts with ALY2 and MOS11.

It localises to the nucleus. The enzyme catalyses ATP + H2O = ADP + phosphate + H(+). Its function is as follows. ATP-dependent RNA helicase involved in pre-mRNA splicing. Required for the export of mRNA out of the nucleus. In addition to ssRNA and dsRNA, binds dsDNA, but not ssDNA. The polypeptide is DEAD-box ATP-dependent RNA helicase 56 (RH56) (Arabidopsis thaliana (Mouse-ear cress)).